The chain runs to 356 residues: 3-isopropylmalate dehydrogenase (356 aa).

Substrate is bound by residues Arg95, Arg105, Arg133, and Asp223. Mg(2+) contacts are provided by Asp223, Asp247, and Asp251. 281-293 (GSAPDIAGQNKAN) is an NAD(+) binding site.

This sequence belongs to the isocitrate and isopropylmalate dehydrogenases family. LeuB type 1 subfamily. As to quaternary structure, homodimer. The cofactor is Mg(2+). Mn(2+) is required as a cofactor.

It localises to the cytoplasm. The enzyme catalyses (2R,3S)-3-isopropylmalate + NAD(+) = 4-methyl-2-oxopentanoate + CO2 + NADH. The protein operates within amino-acid biosynthesis; L-leucine biosynthesis; L-leucine from 3-methyl-2-oxobutanoate: step 3/4. Its function is as follows. Catalyzes the oxidation of 3-carboxy-2-hydroxy-4-methylpentanoate (3-isopropylmalate) to 3-carboxy-4-methyl-2-oxopentanoate. The product decarboxylates to 4-methyl-2 oxopentanoate. The chain is 3-isopropylmalate dehydrogenase from Neisseria gonorrhoeae (strain ATCC 700825 / FA 1090).